Reading from the N-terminus, the 954-residue chain is Glycine dehydrogenase (decarboxylating) (954 aa).

Lys-704 carries the post-translational modification N6-(pyridoxal phosphate)lysine.

It belongs to the GcvP family. As to quaternary structure, the glycine cleavage system is composed of four proteins: P, T, L and H. It depends on pyridoxal 5'-phosphate as a cofactor.

The catalysed reaction is N(6)-[(R)-lipoyl]-L-lysyl-[glycine-cleavage complex H protein] + glycine + H(+) = N(6)-[(R)-S(8)-aminomethyldihydrolipoyl]-L-lysyl-[glycine-cleavage complex H protein] + CO2. Functionally, the glycine cleavage system catalyzes the degradation of glycine. The P protein binds the alpha-amino group of glycine through its pyridoxal phosphate cofactor; CO(2) is released and the remaining methylamine moiety is then transferred to the lipoamide cofactor of the H protein. The protein is Glycine dehydrogenase (decarboxylating) of Agrobacterium fabrum (strain C58 / ATCC 33970) (Agrobacterium tumefaciens (strain C58)).